The chain runs to 734 residues: Photosystem I P700 chlorophyll a apoprotein A2 (734 aa).

8 helical membrane-spanning segments follow: residues 46-69, 135-158, 175-199, 273-291, 330-353, 369-395, 417-439, and 517-535; these read IFASHFGQLAIIFLWTSGNLFHVA, LYNGALFLLFISAISLIAGWLHLQ, LNHHLSGLFGVSSLAWTGHLVHVAI, IAHHHLAIAFIFLIAGHMY, IHFQLGLALASLGVITSLVAQHMY, AALYTHHQYIAGFIMTGAFAHGAIFFI, AIISHLSWASLFLGFHTLGLYVH, and FLVHHAIALGLHTTTLILV. Positions 559 and 568 each coordinate [4Fe-4S] cluster. The next 2 helical transmembrane spans lie at 575 to 596 and 643 to 665; these read AFYLAVFWMLNTIGWVTFYWHW and LSVWAWMFLFGHLVWATGFMFLI. His654, Met662, and Tyr670 together coordinate chlorophyll a. Trp671 lines the phylloquinone pocket. A helical membrane pass occupies residues 707 to 727; that stretch reads LVGLAHFSVGYIFTYAAFLIA.

Belongs to the PsaA/PsaB family. As to quaternary structure, the PsaA/B heterodimer binds the P700 chlorophyll special pair and subsequent electron acceptors. PSI consists of a core antenna complex that captures photons, and an electron transfer chain that converts photonic excitation into a charge separation. The eukaryotic PSI reaction center is composed of at least 11 subunits. It depends on P700 is a chlorophyll a/chlorophyll a' dimer, A0 is one or more chlorophyll a, A1 is one or both phylloquinones and FX is a shared 4Fe-4S iron-sulfur center. as a cofactor.

The protein resides in the plastid. Its subcellular location is the chloroplast thylakoid membrane. It carries out the reaction reduced [plastocyanin] + hnu + oxidized [2Fe-2S]-[ferredoxin] = oxidized [plastocyanin] + reduced [2Fe-2S]-[ferredoxin]. Functionally, psaA and PsaB bind P700, the primary electron donor of photosystem I (PSI), as well as the electron acceptors A0, A1 and FX. PSI is a plastocyanin-ferredoxin oxidoreductase, converting photonic excitation into a charge separation, which transfers an electron from the donor P700 chlorophyll pair to the spectroscopically characterized acceptors A0, A1, FX, FA and FB in turn. Oxidized P700 is reduced on the lumenal side of the thylakoid membrane by plastocyanin. The sequence is that of Photosystem I P700 chlorophyll a apoprotein A2 from Morus indica (Mulberry).